The chain runs to 338 residues: Anthranilate phosphoribosyltransferase (338 aa).

5-phospho-alpha-D-ribose 1-diphosphate contacts are provided by residues G78, 81 to 82 (GD), T86, 88 to 91 (NIST), 106 to 114 (KHGNRSVSS), and S118. Residue G78 participates in anthranilate binding. A Mg(2+)-binding site is contributed by S90. Residue N109 coordinates anthranilate. R164 is a binding site for anthranilate. Mg(2+) is bound by residues D223 and E224.

The protein belongs to the anthranilate phosphoribosyltransferase family. In terms of assembly, homodimer. It depends on Mg(2+) as a cofactor.

The enzyme catalyses N-(5-phospho-beta-D-ribosyl)anthranilate + diphosphate = 5-phospho-alpha-D-ribose 1-diphosphate + anthranilate. It participates in amino-acid biosynthesis; L-tryptophan biosynthesis; L-tryptophan from chorismate: step 2/5. Catalyzes the transfer of the phosphoribosyl group of 5-phosphorylribose-1-pyrophosphate (PRPP) to anthranilate to yield N-(5'-phosphoribosyl)-anthranilate (PRA). This chain is Anthranilate phosphoribosyltransferase, found in Bacillus licheniformis (strain ATCC 14580 / DSM 13 / JCM 2505 / CCUG 7422 / NBRC 12200 / NCIMB 9375 / NCTC 10341 / NRRL NRS-1264 / Gibson 46).